A 138-amino-acid polypeptide reads, in one-letter code: MAQKLKLEMVTPAAQVLIEEVDEIAAPGSLGQFGVLPGHTPLLTTLQVGEFSYRKGSDVYYLAVNWGYVEVAEDRVLVLVETAETQDHIDLARAKAALGRAEARLRELTPADKEYHNMQAALQRAMVRIQVAGRGGRG.

Belongs to the ATPase epsilon chain family. In terms of assembly, F-type ATPases have 2 components, CF(1) - the catalytic core - and CF(0) - the membrane proton channel. CF(1) has five subunits: alpha(3), beta(3), gamma(1), delta(1), epsilon(1). CF(0) has three main subunits: a, b and c.

It is found in the cell inner membrane. Produces ATP from ADP in the presence of a proton gradient across the membrane. This chain is ATP synthase epsilon chain 1, found in Syntrophotalea carbinolica (strain DSM 2380 / NBRC 103641 / GraBd1) (Pelobacter carbinolicus).